The following is a 377-amino-acid chain: EASQSPQYSFESLPQKICLICGDEASGCHYGVLTCGSCKVFFKRAMEGQHNYLCAGRNDCIVDKIRRKNCPACRLRKCCQAGMVLGGRKFKKFNKVRVMRTLDAVALPQPVGIPNESQALSQRITFSPSQDLQLIPPLINLLMSIEPDMVYAGHDNSKPDTSSSLLTSLNQLGERQLLSVVKWSKSLPGFRNLHIDDQITLIQYSWMSLMVFGLGWRSYKHVSGQMLYFAPDLILNEQRMKESSFYSLCLTMWQIPQEFVKLQVSQEEFLCMKVLLLLNTIPLEGLRSQNQFEEMRSSYIRELIKAIGLRQKGVVPSSQRFYQLTKLLDNLHDLVKQLHLYCLNTFIQSRALSVEFPEMMSEVIAAQLPKILAGMVK.

The modulating, Pro-Rich stretch occupies residues 1-15; sequence EASQSPQYSFESLPQ. The nuclear receptor DNA-binding region spans 16 to 90; sequence KICLICGDEA…AGMVLGGRKF (75 aa). 2 consecutive NR C4-type zinc fingers follow at residues 18-38 and 54-78; these read CLICGDEASGCHYGVLTCGSC and CAGRNDCIVDKIRRKNCPACRLRKC. Ser127 carries the post-translational modification Phosphoserine. The NR LBD domain occupies 130-364; sequence QDLQLIPPLI…EFPEMMSEVI (235 aa). The tract at residues 138–377 is AF2; mediates transcriptional activation; the sequence is LINLLMSIEP…LPKILAGMVK (240 aa).

Belongs to the nuclear hormone receptor family. NR3 subfamily. As to quaternary structure, interacts with CUEDC2, SMARD1 and with UNC45A. Interacts with PRMT2. Interacts with NCOA2 and NCOA1. Interacts with KLF9. Interacts with GTF2B. Palmitoylated by ZDHHC7 and ZDHHC21. Palmitoylation is required for plasma membrane targeting and for rapid intracellular signaling via ERK and AKT kinases and cAMP generation.

Its subcellular location is the nucleus. The steroid hormones and their receptors are involved in the regulation of eukaryotic gene expression and affect cellular proliferation and differentiation in target tissues. Transcriptional activator of several progesteron-dependent promoters in a variety of cell types. Involved in activation of SRC-dependent MAPK signaling on hormone stimulation. The sequence is that of Progesterone receptor (PGR) from Ovis aries (Sheep).